A 249-amino-acid chain; its full sequence is Type III pantothenate kinase (249 aa).

An ATP-binding site is contributed by 6 to 13 (DCGNSFIK). Substrate is bound by residues Y93 and 100–103 (GLDR). D102 (proton acceptor) is an active-site residue. D122 serves as a coordination point for K(+). T125 contacts ATP. T181 lines the substrate pocket.

Belongs to the type III pantothenate kinase family. As to quaternary structure, homodimer. NH4(+) serves as cofactor. Requires K(+) as cofactor.

Its subcellular location is the cytoplasm. The enzyme catalyses (R)-pantothenate + ATP = (R)-4'-phosphopantothenate + ADP + H(+). It functions in the pathway cofactor biosynthesis; coenzyme A biosynthesis; CoA from (R)-pantothenate: step 1/5. Its function is as follows. Catalyzes the phosphorylation of pantothenate (Pan), the first step in CoA biosynthesis. This Pseudomonas fluorescens (strain Pf0-1) protein is Type III pantothenate kinase.